Reading from the N-terminus, the 394-residue chain is MTRIETRTEPMVINMGPHHPSMHGVLRLIVTLDGEDVVDCEPVIGYLHRGMEKIAENRTNVMYVPYVSRWDYAAGMFNEAITVNAPEKLADIEVPKRAQYIRVIMLELNRIANHLLWLGPFLADVGAQTPFFYIFREREMIYDLWEAATGMRLINNNYFRIGGVAVDLPYGWNDKCLDFCDYFDPKVDEYEKLITNNPIFRRRVEGVGTITRDEAINWSLSGPMLRASGVKWDLRKVDHYECYDDFDWDVQWETAGDCFARYLVRIREMRESVKIIRQALKGMPGGAYENLEAKRMLEGKKSEWNDFDYQYIAKKVAPTFKIPDGEHYVRLESGKGEVGIFIQGNNNVFPWRWKIRSADFNNLQILPHLLKGVKVADIMAILGSIDVIMGSVDR.

Belongs to the complex I 49 kDa subunit family. NDH-1 can be composed of about 15 different subunits; different subcomplexes with different compositions have been identified which probably have different functions.

It is found in the cellular thylakoid membrane. The catalysed reaction is a plastoquinone + NADH + (n+1) H(+)(in) = a plastoquinol + NAD(+) + n H(+)(out). It catalyses the reaction a plastoquinone + NADPH + (n+1) H(+)(in) = a plastoquinol + NADP(+) + n H(+)(out). Its function is as follows. NDH-1 shuttles electrons from an unknown electron donor, via FMN and iron-sulfur (Fe-S) centers, to quinones in the respiratory and/or the photosynthetic chain. The immediate electron acceptor for the enzyme in this species is believed to be plastoquinone. Couples the redox reaction to proton translocation, and thus conserves the redox energy in a proton gradient. Cyanobacterial NDH-1 also plays a role in inorganic carbon-concentration. The polypeptide is NAD(P)H-quinone oxidoreductase subunit H (Picosynechococcus sp. (strain ATCC 27264 / PCC 7002 / PR-6) (Agmenellum quadruplicatum)).